The chain runs to 464 residues: Alpha-amylase (464 aa).

An N-terminal signal peptide occupies residues 1–21 (MKNTAGILAIAGMLIAPLAHA). Residues His-107 and Arg-213 each coordinate substrate. Asp-215 serves as the catalytic Nucleophile. Residue 218 to 219 (KH) coordinates substrate. Glu-242 serves as the catalytic Proton donor. The substrate site is built by Gly-247 and His-313.

It belongs to the glycosyl hydrolase 13 family.

It localises to the secreted. The catalysed reaction is Endohydrolysis of (1-&gt;4)-alpha-D-glucosidic linkages in polysaccharides containing three or more (1-&gt;4)-alpha-linked D-glucose units.. This Aeromonas hydrophila protein is Alpha-amylase.